Consider the following 109-residue polypeptide: Large ribosomal subunit protein uL22 (109 aa).

It belongs to the universal ribosomal protein uL22 family. As to quaternary structure, part of the 50S ribosomal subunit.

Its function is as follows. This protein binds specifically to 23S rRNA; its binding is stimulated by other ribosomal proteins, e.g. L4, L17, and L20. It is important during the early stages of 50S assembly. It makes multiple contacts with different domains of the 23S rRNA in the assembled 50S subunit and ribosome. In terms of biological role, the globular domain of the protein is located near the polypeptide exit tunnel on the outside of the subunit, while an extended beta-hairpin is found that lines the wall of the exit tunnel in the center of the 70S ribosome. The sequence is that of Large ribosomal subunit protein uL22 from Cupriavidus metallidurans (strain ATCC 43123 / DSM 2839 / NBRC 102507 / CH34) (Ralstonia metallidurans).